Reading from the N-terminus, the 633-residue chain is tRNA uridine 5-carboxymethylaminomethyl modification enzyme MnmG (633 aa).

FAD contacts are provided by residues Gly-15–Gly-20, Ile-127, and Ser-182. Position 276–290 (Gly-276–Phe-290) interacts with NAD(+). Gln-373 is a binding site for FAD.

The protein belongs to the MnmG family. In terms of assembly, homodimer. Heterotetramer of two MnmE and two MnmG subunits. FAD serves as cofactor.

The protein resides in the cytoplasm. NAD-binding protein involved in the addition of a carboxymethylaminomethyl (cmnm) group at the wobble position (U34) of certain tRNAs, forming tRNA-cmnm(5)s(2)U34. The protein is tRNA uridine 5-carboxymethylaminomethyl modification enzyme MnmG of Streptococcus agalactiae serotype III (strain NEM316).